The primary structure comprises 309 residues: Ribonuclease Z (309 aa).

Positions 63, 65, 67, 68, 141, 208, and 266 each coordinate Zn(2+). The active-site Proton acceptor is the Asp-67.

Belongs to the RNase Z family. In terms of assembly, homodimer. It depends on Zn(2+) as a cofactor.

It catalyses the reaction Endonucleolytic cleavage of RNA, removing extra 3' nucleotides from tRNA precursor, generating 3' termini of tRNAs. A 3'-hydroxy group is left at the tRNA terminus and a 5'-phosphoryl group is left at the trailer molecule.. In terms of biological role, zinc phosphodiesterase, which displays some tRNA 3'-processing endonuclease activity. Probably involved in tRNA maturation, by removing a 3'-trailer from precursor tRNA. In Salinispora arenicola (strain CNS-205), this protein is Ribonuclease Z.